Here is a 622-residue protein sequence, read N- to C-terminus: Probable potassium transport system protein Kup 2 (622 aa).

The next 12 membrane-spanning stretches (helical) occupy residues Leu-9–Leu-29, Pro-46–Val-66, Thr-99–Ile-119, Pro-137–Ile-157, Phe-169–Phe-189, Ala-213–Ala-233, Trp-247–Leu-267, Ala-285–Ile-305, Ile-337–Phe-357, Leu-363–Cys-383, Leu-396–Leu-416, and Ile-419–Ser-439.

It belongs to the HAK/KUP transporter (TC 2.A.72) family.

Its subcellular location is the cell inner membrane. The catalysed reaction is K(+)(in) + H(+)(in) = K(+)(out) + H(+)(out). Its function is as follows. Transport of potassium into the cell. Likely operates as a K(+):H(+) symporter. In Aeromonas hydrophila subsp. hydrophila (strain ATCC 7966 / DSM 30187 / BCRC 13018 / CCUG 14551 / JCM 1027 / KCTC 2358 / NCIMB 9240 / NCTC 8049), this protein is Probable potassium transport system protein Kup 2.